The chain runs to 424 residues: Arginine biosynthesis bifunctional protein ArgJ (424 aa).

Substrate-binding residues include threonine 166, lysine 192, threonine 203, glutamate 290, asparagine 419, and threonine 424. Threonine 203 functions as the Nucleophile in the catalytic mechanism.

It belongs to the ArgJ family. Heterotetramer of two alpha and two beta chains.

Its subcellular location is the cytoplasm. The enzyme catalyses N(2)-acetyl-L-ornithine + L-glutamate = N-acetyl-L-glutamate + L-ornithine. The catalysed reaction is L-glutamate + acetyl-CoA = N-acetyl-L-glutamate + CoA + H(+). The protein operates within amino-acid biosynthesis; L-arginine biosynthesis; L-ornithine and N-acetyl-L-glutamate from L-glutamate and N(2)-acetyl-L-ornithine (cyclic): step 1/1. It participates in amino-acid biosynthesis; L-arginine biosynthesis; N(2)-acetyl-L-ornithine from L-glutamate: step 1/4. In terms of biological role, catalyzes two activities which are involved in the cyclic version of arginine biosynthesis: the synthesis of N-acetylglutamate from glutamate and acetyl-CoA as the acetyl donor, and of ornithine by transacetylation between N(2)-acetylornithine and glutamate. The protein is Arginine biosynthesis bifunctional protein ArgJ of Colwellia psychrerythraea (strain 34H / ATCC BAA-681) (Vibrio psychroerythus).